Reading from the N-terminus, the 672-residue chain is MSPSSSDRLGYPFSTFLDQHSAQLNASAVPPELWHSLYRKLSDQTFDAGDHFQIICEMDENDEKKTLFVRALEDMHNNDEENIFLIDHFISFPAESARKCVESNEKLPERLAALFGIDDDDCSSDGDETVEKIETSCEKEEEEHARRLSEPGLPRHESVDARLSSYSVDDPKKTMTERVMRNLWKFAQTYTVSYQLENGEMEKKHVWYVMDDFGSRIRHSGCPNVRIVPLMFLPQNCAYSIMFLTKPVKIDDEITMDWAANVITAKNPEWRQYLEMPWAEKDFSSESMVPGPPTLEYFTSGRNPDFLADEKDKKTCESAIFSALSVLKKQGKIKIFLQIFADDTQLTEHLKSRQIEYVDDWKAADVIWMIKHFHDYSNLAQENPCAQINQFPFESCITVKDLLAACAMRDPSKNDWYQLTYNLNTQLPEFVARFQNRQKNGEHNVWIVKPWNLARGMEMAVTDDLNQIIRMVETGPKIVCEYIARPLLFPRPDNGNKVKFDLRYIVFVNAIGPVTAYVYNRFWIRFAINQFQLGAYDDLETHFTVFNYLDKEKVLQMKCEKFVEIIEKTYPKLKWTQIQADINSTIRKAIEVAASEPSPRGVAPNTQSRAMYGVDIMLQESPESPDVIKPTLLEINFMPDTTRACQYYPDFADTVFDTMFLDEIDPTKVTPI.

The TTL domain maps to 332-670 (KIKIFLQIFA…LDEIDPTKVT (339 aa)). Residues 480–483 (CEYI), K499, and D501 each bind ATP.

This sequence belongs to the tubulin--tyrosine ligase family.

Functionally, regulates microtubule dynamics in uterine muscle cells. This Caenorhabditis briggsae protein is Tubulin--tyrosine ligase-like protein 12.